The following is a 206-amino-acid chain: Holliday junction branch migration complex subunit RuvA (206 aa).

The domain I stretch occupies residues 1 to 63 (MIASLRGTVI…EDAMKLYGFI (63 aa)). The segment at 64–142 (DNESREMFSV…AFAAGVVDEA (79 aa)) is domain II. Positions 143-153 (GEQISLPNANI) are flexible linker. The segment at 154–206 (ASEVVVEQVSQALVGLGFSEKQSDDAVSFVLAADPSLDTSGALRAALAKLSGK) is domain III.

The protein belongs to the RuvA family. In terms of assembly, homotetramer. Forms an RuvA(8)-RuvB(12)-Holliday junction (HJ) complex. HJ DNA is sandwiched between 2 RuvA tetramers; dsDNA enters through RuvA and exits via RuvB. An RuvB hexamer assembles on each DNA strand where it exits the tetramer. Each RuvB hexamer is contacted by two RuvA subunits (via domain III) on 2 adjacent RuvB subunits; this complex drives branch migration. In the full resolvosome a probable DNA-RuvA(4)-RuvB(12)-RuvC(2) complex forms which resolves the HJ.

The protein resides in the cytoplasm. Its function is as follows. The RuvA-RuvB-RuvC complex processes Holliday junction (HJ) DNA during genetic recombination and DNA repair, while the RuvA-RuvB complex plays an important role in the rescue of blocked DNA replication forks via replication fork reversal (RFR). RuvA specifically binds to HJ cruciform DNA, conferring on it an open structure. The RuvB hexamer acts as an ATP-dependent pump, pulling dsDNA into and through the RuvAB complex. HJ branch migration allows RuvC to scan DNA until it finds its consensus sequence, where it cleaves and resolves the cruciform DNA. In Corynebacterium glutamicum (strain R), this protein is Holliday junction branch migration complex subunit RuvA.